The sequence spans 768 residues: Post-transcriptional regulator MKT1 (768 aa).

It belongs to the XPG/RAD2 endonuclease family. Interacts with PBP1.

It localises to the cytoplasm. It is found in the cytosol. Involved in 3'-UTR mediated RNA regulation. Complexes with PBP1 to promote mRNA interactions with poly(A)-binding protein. The sequence is that of Post-transcriptional regulator MKT1 from Cryptococcus neoformans var. grubii serotype A (strain H99 / ATCC 208821 / CBS 10515 / FGSC 9487) (Filobasidiella neoformans var. grubii).